The sequence spans 69 residues: Large ribosomal subunit protein uL29 (69 aa).

Belongs to the universal ribosomal protein uL29 family.

This Synechococcus sp. (strain WH7803) protein is Large ribosomal subunit protein uL29.